We begin with the raw amino-acid sequence, 100 residues long: Small ribosomal subunit protein uS14c (100 aa).

It belongs to the universal ribosomal protein uS14 family. As to quaternary structure, part of the 30S ribosomal subunit.

The protein resides in the plastid. Its subcellular location is the chloroplast. Its function is as follows. Binds 16S rRNA, required for the assembly of 30S particles. This Platanus occidentalis (Sycamore) protein is Small ribosomal subunit protein uS14c.